Here is a 683-residue protein sequence, read N- to C-terminus: Kinesin-like protein KIF2B (683 aa).

Thr125 is modified (phosphothreonine; by PLK1). Residues 141-176 adopt a coiled-coil conformation; the sequence is LMTQRKSACLREIEKLQKQRERRRRLHREIRAQRAR. Ser204 is subject to Phosphoserine; by PLK1. Residues 213-543 form the Kinesin motor domain; sequence RICVCVRKRP…LRYANRVKEI (331 aa). 303–310 provides a ligand contact to ATP; it reads GQTGSGKT. The stretch at 640 to 672 forms a coiled coil; the sequence is QLLSILEKKIDILTEIRRKLKLLQADIQKENRH.

Belongs to the TRAFAC class myosin-kinesin ATPase superfamily. Kinesin family. MCAK/KIF2 subfamily. Phosphorylation at Thr-125 by PLK1 is required for activity in the correction of kinetochore-microtubules attachment errors, while phosphorylation at Ser-204 also by PLK1 is required for the kinetochore localization and activity in prometaphase.

The protein localises to the cytoplasm. It is found in the cytoskeleton. The protein resides in the microtubule organizing center. Its subcellular location is the centrosome. It localises to the spindle. The protein localises to the chromosome. It is found in the centromere. The protein resides in the kinetochore. In terms of biological role, plus end-directed microtubule-dependent motor required for spindle assembly and chromosome movement during mitosis. Has microtubule depolymerization activity. Plays a role in chromosome congression. The sequence is that of Kinesin-like protein KIF2B from Bos taurus (Bovine).